The following is a 446-amino-acid chain: Anthranilate N-benzoyltransferase protein 2 (446 aa).

Residues His-164 and Asp-393 each act as proton acceptor in the active site.

The protein belongs to the plant acyltransferase family. Post-translationally, N-terminus is blocked.

It carries out the reaction anthranilate + benzoyl-CoA = N-benzoylanthranilate + CoA. It functions in the pathway phytoalexin biosynthesis; methoxydianthramide B biosynthesis. In terms of biological role, catalyzes the formation of N-benzoylanthranilate, in the course of methoxydianthramide B, a phytoalexin. Phytoalexins are produced in response to infection by parasites, and are essential for the expression of disease resistance. This Dianthus caryophyllus (Carnation) protein is Anthranilate N-benzoyltransferase protein 2 (HCBT2).